We begin with the raw amino-acid sequence, 592 residues long: A-type ATP synthase subunit A (592 aa).

Residue glycine 233 to threonine 240 coordinates ATP.

This sequence belongs to the ATPase alpha/beta chains family. Has multiple subunits with at least A(3), B(3), C, D, E, F, H, I and proteolipid K(x).

It is found in the cell membrane. The catalysed reaction is ATP + H2O + 4 H(+)(in) = ADP + phosphate + 5 H(+)(out). Functionally, component of the A-type ATP synthase that produces ATP from ADP in the presence of a proton gradient across the membrane. The A chain is the catalytic subunit. The chain is A-type ATP synthase subunit A from Saccharolobus islandicus (strain M.16.27) (Sulfolobus islandicus).